Consider the following 635-residue polypeptide: tRNA 5-methylaminomethyl-2-thiouridine biosynthesis bifunctional protein MnmC (635 aa).

The interval 1-231 is tRNA (mnm(5)s(2)U34)-methyltransferase; it reads MPITPASLSF…KRQMLRGRYL (231 aa). The interval 249-635 is FAD-dependent cmnm(5)s(2)U34 oxidoreductase; that stretch reads IGAGVAGTSI…RPARTLRGED (387 aa).

In the N-terminal section; belongs to the methyltransferase superfamily. tRNA (mnm(5)s(2)U34)-methyltransferase family. This sequence in the C-terminal section; belongs to the DAO family. It depends on FAD as a cofactor.

Its subcellular location is the cytoplasm. It catalyses the reaction 5-aminomethyl-2-thiouridine(34) in tRNA + S-adenosyl-L-methionine = 5-methylaminomethyl-2-thiouridine(34) in tRNA + S-adenosyl-L-homocysteine + H(+). Functionally, catalyzes the last two steps in the biosynthesis of 5-methylaminomethyl-2-thiouridine (mnm(5)s(2)U) at the wobble position (U34) in tRNA. Catalyzes the FAD-dependent demodification of cmnm(5)s(2)U34 to nm(5)s(2)U34, followed by the transfer of a methyl group from S-adenosyl-L-methionine to nm(5)s(2)U34, to form mnm(5)s(2)U34. This Azoarcus sp. (strain BH72) protein is tRNA 5-methylaminomethyl-2-thiouridine biosynthesis bifunctional protein MnmC.